Here is a 160-residue protein sequence, read N- to C-terminus: RTX-II toxin-activating lysine-acyltransferase ApxIIC (160 aa).

Active-site residues include histidine 23 and aspartate 92.

The protein belongs to the RTX toxin acyltransferase family. As to quaternary structure, homodimer.

The protein localises to the cytoplasm. The catalysed reaction is a fatty acyl-[ACP] + L-lysyl-[protein] = N(6)-(fatty acyl)-L-lysyl-[protein] + holo-[ACP] + H(+). Functionally, protein-lysine acyltransferase that catalyzes fatty acylation of the protoxin, thereby converting it to the active toxin. This chain is RTX-II toxin-activating lysine-acyltransferase ApxIIC (apxIIC), found in Actinobacillus pleuropneumoniae (Haemophilus pleuropneumoniae).